The sequence spans 282 residues: MAPSAKDLLELFKVKQTALLLVTGVCAYLEGAGKPDPATLVLASLSMFLSIAGTTGFNMVLDADIDSAMFRTRNRPLPARRMSAKDAVLASSAALAAGLAAGVAVNPYVFVAGLLGFLIDIAVYTVLLKRKSPWSVVFGGFAGGMPALGGWAAATGGFGYQGVLLMLLVAVWSSLHIWTLSTYYSEDYRRAGVPMLPAVYGERAGVVASLAAAVAVFLVAFLAFRAGLISAVGFAVAAVPLVLAVAVLLKGLVSGEYREKAYRAFKLVNIFMGLFFVLLVLT.

8 helical membrane-spanning segments follow: residues 40-60, 87-107, 108-128, 135-157, 162-184, 204-224, 228-248, and 261-281; these read LVLASLSMFLSIAGTTGFNMV, AVLASSAALAAGLAAGVAVNP, YVFVAGLLGFLIDIAVYTVLL, SVVFGGFAGGMPALGGWAAATGG, GVLLMLLVAVWSSLHIWTLSTYY, AGVVASLAAAVAVFLVAFLAF, LISAVGFAVAAVPLVLAVAVL, and AYRAFKLVNIFMGLFFVLLVL.

Belongs to the UbiA prenyltransferase family. Protoheme IX farnesyltransferase subfamily.

It is found in the cell membrane. The catalysed reaction is heme b + (2E,6E)-farnesyl diphosphate + H2O = Fe(II)-heme o + diphosphate. It functions in the pathway porphyrin-containing compound metabolism; heme O biosynthesis; heme O from protoheme: step 1/1. In terms of biological role, converts heme B (protoheme IX) to heme O by substitution of the vinyl group on carbon 2 of heme B porphyrin ring with a hydroxyethyl farnesyl side group. The chain is Protoheme IX farnesyltransferase from Thermofilum pendens (strain DSM 2475 / Hrk 5).